A 269-amino-acid chain; its full sequence is Calretinin (269 aa).

EF-hand domains are found at residues 14 to 49 (LSAS…LESA), 61 to 96 (SLGD…EENF), 105 to 140 (GSSS…LLKK), 149 to 184 (KLQE…QENF), 193 to 228 (LSSE…LYEK), and 230 to 265 (KKEM…VLCS). Residues aspartate 27, aspartate 29, asparagine 31, tyrosine 33, glutamate 38, aspartate 74, asparagine 76, aspartate 78, lysine 80, glutamate 85, aspartate 118, aspartate 120, serine 122, tyrosine 124, glutamate 129, aspartate 162, asparagine 164, aspartate 166, lysine 168, glutamate 173, aspartate 206, aspartate 208, serine 210, and glutamate 217 each contribute to the Ca(2+) site.

The protein belongs to the calbindin family.

The protein resides in the synapse. It is found in the cell projection. It localises to the dendrite. In terms of biological role, calcium-binding protein involved in calcium homeostasis and signal transduction. It plays a critical role in buffering intracellular calcium levels and modulating calcium-dependent signaling pathways. Predominantly expressed in specific neuronal populations, influences synaptic plasticity and neuronal excitability, contributing to learning and memory. During embryonic development, it facilitates neuronal differentiation and maturation. This is Calretinin (CALB2) from Gallus gallus (Chicken).